The chain runs to 505 residues: Deoxyguanosinetriphosphate triphosphohydrolase (505 aa).

One can recognise an HD domain in the interval 66–273; it reads RLTHSMEVQQ…MEAADDISYC (208 aa).

It belongs to the dGTPase family. Type 1 subfamily. In terms of assembly, homotetramer. Requires Mg(2+) as cofactor.

The enzyme catalyses dGTP + H2O = 2'-deoxyguanosine + triphosphate + H(+). Functionally, dGTPase preferentially hydrolyzes dGTP over the other canonical NTPs. The chain is Deoxyguanosinetriphosphate triphosphohydrolase from Salmonella schwarzengrund (strain CVM19633).